A 196-amino-acid polypeptide reads, in one-letter code: Ribose 1,5-bisphosphate phosphokinase PhnN (196 aa).

This sequence belongs to the ribose 1,5-bisphosphokinase family.

The enzyme catalyses alpha-D-ribose 1,5-bisphosphate + ATP = 5-phospho-alpha-D-ribose 1-diphosphate + ADP. It functions in the pathway metabolic intermediate biosynthesis; 5-phospho-alpha-D-ribose 1-diphosphate biosynthesis; 5-phospho-alpha-D-ribose 1-diphosphate from D-ribose 5-phosphate (route II): step 3/3. Its function is as follows. Catalyzes the phosphorylation of ribose 1,5-bisphosphate to 5-phospho-D-ribosyl alpha-1-diphosphate (PRPP). The protein is Ribose 1,5-bisphosphate phosphokinase PhnN of Psychromonas ingrahamii (strain DSM 17664 / CCUG 51855 / 37).